A 3001-amino-acid polypeptide reads, in one-letter code: BEACH domain-containing protein C2 (3001 aa).

Disordered stretches follow at residues 43–80, 103–156, 1018–1076, 1846–1868, 2039–2071, 2101–2132, and 2193–2212; these read DFEQ…SSFG, DVQS…KATV, NVLA…NVGS, TFSS…PRDK, YSGT…SNPP, AEEH…RTSN, and NLAD…DRSW. Ser48 is modified (phosphoserine). 3 stretches are compositionally biased toward polar residues: residues 57-72, 121-132, and 1037-1050; these read NESQ…FSNS, SMQQSLSETSLD, and SPYN…QLDS. The segment covering 1854-1863 has biased composition (pro residues); the sequence is LEPPNNNAPP. A compositionally biased stretch (basic and acidic residues) spans 2101 to 2119; the sequence is AEEHKRDEGRISGSHEHAS. Positions 2120-2129 are enriched in polar residues; it reads RTSAGNSDPR. The BEACH-type PH domain maps to 2151-2260; that stretch reads ELDERILLEL…GRRNAYRAIV (110 aa). Residues 2196–2211 show a composition bias toward basic and acidic residues; that stretch reads DHSDESQSGDQEKDRS. A BEACH domain is found at 2275–2564; that stretch reads QRPEQLLRRT…QLLTVPHMKR (290 aa). 5 WD repeats span residues 2679–2718, 2721–2760, 2802–2841, 2842–2881, and 2953–2992; these read SGIR…TLET, GHCA…TSRT, GHRR…LIRR, LVGV…IAKA, and GQGQ…LKVV.

The sequence is that of BEACH domain-containing protein C2 from Arabidopsis thaliana (Mouse-ear cress).